A 128-amino-acid polypeptide reads, in one-letter code: Large-conductance mechanosensitive channel (128 aa).

Transmembrane regions (helical) follow at residues 11 to 31 (FALK…AAFG) and 70 to 90 (GAFI…FIFV).

It belongs to the MscL family. Homopentamer.

It localises to the cell membrane. Functionally, channel that opens in response to stretch forces in the membrane lipid bilayer. May participate in the regulation of osmotic pressure changes within the cell. The polypeptide is Large-conductance mechanosensitive channel (Listeria monocytogenes serotype 4a (strain HCC23)).